The following is a 162-amino-acid chain: MRISKPHLRITSIQCYVCLLLNTHFLTEAGIRVFILGCISAGIPKTEANWEDVRKDLQKIENLIQSLHMDATLYTESDVHPRCKVTTMNCFLLELEVISHESRDGDIEETVKNLILLANSSLSSNGNITESGCKVCEELEEKNITEFLESFKHIVQMFINPP.

Residues 1 to 29 (MRISKPHLRITSIQCYVCLLLNTHFLTEA) form the signal peptide. The propeptide occupies 30-48 (GIRVFILGCISAGIPKTEA). Disulfide bonds link cysteine 83/cysteine 133 and cysteine 90/cysteine 136. 3 N-linked (GlcNAc...) asparagine glycosylation sites follow: asparagine 119, asparagine 127, and asparagine 143.

This sequence belongs to the IL-15/IL-21 family.

It is found in the secreted. In terms of biological role, cytokine that plays a major role in the development of inflammatory and protective immune responses to microbial invaders and parasites by modulating immune cells of both the innate and adaptive immune systems. Stimulates the proliferation of natural killer cells, T-cells and B-cells and promotes the secretion of several cytokines. In monocytes, induces the production of IL8 and monocyte chemotactic protein 1/CCL2, two chemokines that attract neutrophils and monocytes respectively to sites of infection. Unlike most cytokines, which are secreted in soluble form, IL15 is expressed in association with its high affinity IL15RA on the surface of IL15-producing cells and delivers signals to target cells that express IL2RB and IL2RG receptor subunits. Binding to its receptor triggers the phosphorylation of JAK1 and JAK3 and the recruitment and subsequent phosphorylation of signal transducer and activator of transcription-3/STAT3 and STAT5. In mast cells, induces the rapid tyrosine phosphorylation of STAT6 and thereby controls mast cell survival and release of cytokines such as IL4. This Marmota himalayana (Himalayan marmot) protein is Interleukin-15 (IL15).